A 275-amino-acid polypeptide reads, in one-letter code: Spermidine/putrescine transport system permease protein PotB (275 aa).

Residues 1-21 (MIVTIVGWLVLFVFLPNLMII) traverse the membrane as a helical segment. The Periplasmic portion of the chain corresponds to 22 to 60 (GTSFLTRDDASFVKMVFTLDNYTRLLDPLYFEVLLHSLN). Positions 55 to 261 (LLHSLNMALI…IVMGLMLLVY (207 aa)) constitute an ABC transmembrane type-1 domain. Residues 61-81 (MALIATLACLVLGYPFAWFLA) form a helical membrane-spanning segment. The Cytoplasmic segment spans residues 82–89 (KLPHKVRP). A helical transmembrane segment spans residues 90 to 110 (LLLFLLIVPFWTNSLIRIYGL). Over 111-135 (KIFLSTKGYLNEFLLWLGVIDTPIR) the chain is Periplasmic. A helical membrane pass occupies residues 136-156 (IMFTPSAVIIGLVYILLPFMV). Residues 157–187 (MPLYSSIEKLDKPLLEAARDLGASKLQTFIR) are Cytoplasmic-facing. The helical transmembrane segment at 188 to 208 (IIIPLTMPGIIAGCLLVMLPA) threads the bilayer. Residues 209 to 241 (MGLFYVSDLMGGAKNLLIGNVIKVQFLNIRDWP) are Periplasmic-facing. A helical transmembrane segment spans residues 242 to 262 (FGAATSITLTIVMGLMLLVYW). Topologically, residues 263–275 (RASRLLNKKVELE) are cytoplasmic.

The protein belongs to the binding-protein-dependent transport system permease family. CysTW subfamily.

Its subcellular location is the cell inner membrane. Functionally, required for the activity of the bacterial periplasmic transport system of putrescine and spermidine. The sequence is that of Spermidine/putrescine transport system permease protein PotB (potB) from Escherichia coli (strain K12).